Here is a 347-residue protein sequence, read N- to C-terminus: Bifunctional methylenetetrahydrofolate dehydrogenase/cyclohydrolase 2, mitochondrial (347 aa).

Substrate is bound by residues 98 to 102 (YVRNK) and 145 to 147 (VQL). NAD(+) contacts are provided by residues 214–216 (GRS) and Arg-247. Position 323 to 327 (323 to 327 (PGGVG)) interacts with substrate.

The protein belongs to the tetrahydrofolate dehydrogenase/cyclohydrolase family. Mg(2+) serves as cofactor. Isoform 1, isoform 4 and isoform 5 are expressed in brain and placenta.

It localises to the mitochondrion inner membrane. It carries out the reaction (6R)-5,10-methylene-5,6,7,8-tetrahydrofolate + NAD(+) = (6R)-5,10-methenyltetrahydrofolate + NADH. The enzyme catalyses (6R)-5,10-methenyltetrahydrofolate + H2O = (6R)-10-formyltetrahydrofolate + H(+). The catalysed reaction is (6R)-5,10-methylene-5,6,7,8-tetrahydrofolate + NADP(+) = (6R)-5,10-methenyltetrahydrofolate + NADPH. It functions in the pathway one-carbon metabolism; tetrahydrofolate interconversion. Its function is as follows. Bifunctional mitochondrial folate-interconverting enzyme that has both NAD/NADP-dependent methylenetetrahydrofolate dehydrogenase and methenyltetrahydrofolate cyclohydrolase activities. This Homo sapiens (Human) protein is Bifunctional methylenetetrahydrofolate dehydrogenase/cyclohydrolase 2, mitochondrial.